A 265-amino-acid polypeptide reads, in one-letter code: 4-hydroxy-2-oxo-heptane-1,7-dioate aldolase (265 aa).

Residue His45 is the Proton acceptor of the active site. Gln147 lines the substrate pocket. Residue Glu149 coordinates a divalent metal cation. Ala174 and Asp175 together coordinate substrate. Asp175 contributes to the a divalent metal cation binding site.

This sequence belongs to the HpcH/HpaI aldolase family. As to quaternary structure, homohexamer; trimer of dimers. A divalent metal cation serves as cofactor.

The enzyme catalyses 4-hydroxy-2-oxoheptanedioate = succinate semialdehyde + pyruvate. Its pathway is aromatic compound metabolism; 4-hydroxyphenylacetate degradation; pyruvate and succinate semialdehyde from 4-hydroxyphenylacetate: step 7/7. Functionally, catalyzes the reversible retro-aldol cleavage of 4-hydroxy-2-ketoheptane-1,7-dioate (HKHD) to pyruvate and succinic semialdehyde. This chain is 4-hydroxy-2-oxo-heptane-1,7-dioate aldolase, found in Klebsiella pneumoniae subsp. pneumoniae (strain ATCC 700721 / MGH 78578).